The sequence spans 261 residues: Carnitinyl-CoA dehydratase (261 aa).

Catalysis depends on Glu111, which acts as the Nucleophile. Catalysis depends on Glu131, which acts as the Proton acceptor.

The protein belongs to the enoyl-CoA hydratase/isomerase family.

It carries out the reaction (R)-carnitinyl-CoA = crotonobetainyl-CoA + H2O. Its pathway is amine and polyamine metabolism; carnitine metabolism. Functionally, catalyzes the reversible dehydration of L-carnitinyl-CoA to crotonobetainyl-CoA. The chain is Carnitinyl-CoA dehydratase from Salmonella enteritidis PT4 (strain P125109).